A 306-amino-acid polypeptide reads, in one-letter code: D-alanine--D-alanine ligase (306 aa).

Residues 102–300 (KIIAANAGVC…YGDIVQWMVE (199 aa)) enclose the ATP-grasp domain. Residue 128-183 (PMEPPYVIKPVCEGSSFGVVIVQENEAVPPHNIGGSEWGYADEVMVEKYIPGRELT) coordinates ATP. Residues Asp-253, Glu-267, and Asn-269 each contribute to the Mg(2+) site.

The protein belongs to the D-alanine--D-alanine ligase family. Requires Mg(2+) as cofactor. The cofactor is Mn(2+).

The protein resides in the cytoplasm. The catalysed reaction is 2 D-alanine + ATP = D-alanyl-D-alanine + ADP + phosphate + H(+). Its pathway is cell wall biogenesis; peptidoglycan biosynthesis. Functionally, cell wall formation. This is D-alanine--D-alanine ligase from Bartonella tribocorum (strain CIP 105476 / IBS 506).